The sequence spans 533 residues: WD repeat-containing protein PAC11 (533 aa).

Positions 1–19 (MERLKQLEEKRRQLKELRE) are enriched in basic and acidic residues. The segment at 1–36 (MERLKQLEEKRRQLKELRERRKQASLFPGSETMGHH) is disordered. WD repeat units lie at residues 380-422 (FDEV…YLSL) and 432-475 (NHST…AIIG).

Interacts with NUM1, when DYN1 is present.

Its subcellular location is the cytoplasm. It is found in the cytoskeleton. Its function is as follows. Required for viability in the absence of the kinesin-related CIN8 mitotic motor. May be a dynein intermediate chain. This chain is WD repeat-containing protein PAC11 (PAC11), found in Saccharomyces cerevisiae (strain ATCC 204508 / S288c) (Baker's yeast).